The following is a 208-amino-acid chain: High frequency lysogenization protein HflD homolog (208 aa).

This sequence belongs to the HflD family.

The protein resides in the cytoplasm. The protein localises to the cell inner membrane. This Pseudomonas entomophila (strain L48) protein is High frequency lysogenization protein HflD homolog.